Here is a 559-residue protein sequence, read N- to C-terminus: DNA ligase (559 aa).

E231 contacts ATP. K233 (N6-AMP-lysine intermediate) is an active-site residue. The ATP site is built by R238 and E285. Positions 285 and 379 each coordinate Mg(2+). ATP-binding residues include K384 and K399.

This sequence belongs to the ATP-dependent DNA ligase family. As to quaternary structure, interacts with host TOP2A and TOP2B. Mg(2+) serves as cofactor.

Its subcellular location is the host cytoplasm. It carries out the reaction ATP + (deoxyribonucleotide)n-3'-hydroxyl + 5'-phospho-(deoxyribonucleotide)m = (deoxyribonucleotide)n+m + AMP + diphosphate.. In terms of biological role, DNA ligase that seals nicks in double-stranded DNA during DNA replication, DNA recombination and DNA repair. Recruits cellular topoisomerase II to sites of viral replication and assembly. The chain is DNA ligase (OPG180) from Monkeypox virus.